The primary structure comprises 280 residues: Phosphatidylserine decarboxylase proenzyme (280 aa).

Residues aspartate 88, histidine 144, and serine 247 each act as charge relay system; for autoendoproteolytic cleavage activity in the active site. Serine 247 (schiff-base intermediate with substrate; via pyruvic acid; for decarboxylase activity) is an active-site residue. Serine 247 carries the post-translational modification Pyruvic acid (Ser); by autocatalysis.

It belongs to the phosphatidylserine decarboxylase family. PSD-B subfamily. Prokaryotic type I sub-subfamily. Heterodimer of a large membrane-associated beta subunit and a small pyruvoyl-containing alpha subunit. It depends on pyruvate as a cofactor. In terms of processing, is synthesized initially as an inactive proenzyme. Formation of the active enzyme involves a self-maturation process in which the active site pyruvoyl group is generated from an internal serine residue via an autocatalytic post-translational modification. Two non-identical subunits are generated from the proenzyme in this reaction, and the pyruvate is formed at the N-terminus of the alpha chain, which is derived from the carboxyl end of the proenzyme. The autoendoproteolytic cleavage occurs by a canonical serine protease mechanism, in which the side chain hydroxyl group of the serine supplies its oxygen atom to form the C-terminus of the beta chain, while the remainder of the serine residue undergoes an oxidative deamination to produce ammonia and the pyruvoyl prosthetic group on the alpha chain. During this reaction, the Ser that is part of the protease active site of the proenzyme becomes the pyruvoyl prosthetic group, which constitutes an essential element of the active site of the mature decarboxylase.

The protein resides in the cell membrane. The catalysed reaction is a 1,2-diacyl-sn-glycero-3-phospho-L-serine + H(+) = a 1,2-diacyl-sn-glycero-3-phosphoethanolamine + CO2. Its pathway is phospholipid metabolism; phosphatidylethanolamine biosynthesis; phosphatidylethanolamine from CDP-diacylglycerol: step 2/2. In terms of biological role, catalyzes the formation of phosphatidylethanolamine (PtdEtn) from phosphatidylserine (PtdSer). This chain is Phosphatidylserine decarboxylase proenzyme, found in Xanthomonas euvesicatoria pv. vesicatoria (strain 85-10) (Xanthomonas campestris pv. vesicatoria).